The following is a 177-amino-acid chain: Large ribosomal subunit protein uL22 (177 aa).

The disordered stretch occupies residues 118–177; the sequence is VESRPSREGRRGGAGESAGGARARRAQGSKAAAAKKAPASSSTKAATTTEASEEAKGGSQ. Over residues 121–130 the composition is skewed to basic and acidic residues; it reads RPSREGRRGG. A compositionally biased stretch (low complexity) spans 145 to 167; sequence GSKAAAAKKAPASSSTKAATTTE.

The protein belongs to the universal ribosomal protein uL22 family. As to quaternary structure, part of the 50S ribosomal subunit.

This protein binds specifically to 23S rRNA; its binding is stimulated by other ribosomal proteins, e.g. L4, L17, and L20. It is important during the early stages of 50S assembly. It makes multiple contacts with different domains of the 23S rRNA in the assembled 50S subunit and ribosome. Functionally, the globular domain of the protein is located near the polypeptide exit tunnel on the outside of the subunit, while an extended beta-hairpin is found that lines the wall of the exit tunnel in the center of the 70S ribosome. This is Large ribosomal subunit protein uL22 from Mycobacterium sp. (strain JLS).